The following is a 283-amino-acid chain: Diaminopimelate epimerase (283 aa).

N11 and N65 together coordinate substrate. Catalysis depends on C74, which acts as the Proton donor. Residues 75–76 (GN), N163, N196, and 214–215 (ER) each bind substrate. C223 (proton acceptor) is an active-site residue. 224-225 (GT) is a binding site for substrate.

This sequence belongs to the diaminopimelate epimerase family. In terms of assembly, homodimer.

It localises to the cytoplasm. The catalysed reaction is (2S,6S)-2,6-diaminopimelate = meso-2,6-diaminopimelate. The protein operates within amino-acid biosynthesis; L-lysine biosynthesis via DAP pathway; DL-2,6-diaminopimelate from LL-2,6-diaminopimelate: step 1/1. In terms of biological role, catalyzes the stereoinversion of LL-2,6-diaminopimelate (L,L-DAP) to meso-diaminopimelate (meso-DAP), a precursor of L-lysine and an essential component of the bacterial peptidoglycan. The sequence is that of Diaminopimelate epimerase from Desulfitobacterium hafniense (strain DSM 10664 / DCB-2).